A 579-amino-acid chain; its full sequence is Nif-specific regulatory protein (579 aa).

A GAF domain is found at 40–187 (DPVAEVPQIF…MVASLLEQAL (148 aa)). Residues 226 to 454 (IVGSSPAIAE…LENCVNRAAA (229 aa)) form the Sigma-54 factor interaction domain. ATP is bound by residues 254 to 261 (GESGTGKE) and 317 to 326 (ADGGTLFLDE). The segment at 464–536 (EELACRQGAC…PLRTKTAQLS (73 aa)) is inter-domain linker. C468 and C473 together coordinate a divalent metal cation. The interval 502–529 (RVSAPPPEPAPAPEPAPEAPPREEVPLR) is disordered. Tandem repeats lie at residues 505–506 (AP), 507–508 (PP), 509–510 (EP), 511–512 (AP), 513–514 (AP), 515–516 (EP), and 517–518 (AP). The interval 505–518 (APPPEPAPAPEPAP) is 7 X 2 AA tandem repeats of X-P. The segment covering 505–520 (APPPEPAPAPEPAPEA) has biased composition (pro residues). The segment at 537-579 (REELLRALESAGWVQAKAARLLGMTPRQIAYALQKFEIELRKI) is C-terminal DNA-binding domain. A DNA-binding region (H-T-H motif) is located at residues 551–570 (QAKAARLLGMTPRQIAYALQ).

Interacts with sigma-54.

Its function is as follows. Required for activation of most nif operons, which are directly involved in nitrogen fixation. The polypeptide is Nif-specific regulatory protein (nifA1) (Rhodobacter capsulatus (Rhodopseudomonas capsulata)).